The following is a 638-amino-acid chain: RNA exonuclease 3 (638 aa).

The segment at 37–136 is disordered; sequence AQDQVLEQKE…PPRRAPKEAL (100 aa). Residues 55–76 are compositionally biased toward basic and acidic residues; the sequence is LKLEPRPEAKETPKDDLRHVSD. Positions 77–111 are enriched in polar residues; it reads SGRSTPVKKTTAPATNAENISPVSRQPNIPKNTAT. The Exonuclease domain maps to 408–584; sequence ICFDCEMGYT…VEDALATGDL (177 aa). The span at 612 to 622 shows a compositional bias: polar residues; that stretch reads DSSSNTVSMQT. Positions 612–638 are disordered; that stretch reads DSSSNTVSMQTKLGEGAGAKRAREGTS.

The protein belongs to the REXO1/REXO3 family.

Its subcellular location is the cytoplasm. It localises to the nucleus. Its function is as follows. 3' to 5' exoribonuclease required for proper 3' end maturation of MRP RNA and of the U5L snRNA. In Emericella nidulans (strain FGSC A4 / ATCC 38163 / CBS 112.46 / NRRL 194 / M139) (Aspergillus nidulans), this protein is RNA exonuclease 3 (rex3).